We begin with the raw amino-acid sequence, 314 residues long: Probable cell division protein WhiA (314 aa).

The H-T-H motif DNA-binding region spans 274–308 (SLKELGEMMSTGKISKSGVNHRLRKLNEMADKLRS).

Belongs to the WhiA family.

In terms of biological role, involved in cell division and chromosome segregation. This Staphylococcus saprophyticus subsp. saprophyticus (strain ATCC 15305 / DSM 20229 / NCIMB 8711 / NCTC 7292 / S-41) protein is Probable cell division protein WhiA.